The chain runs to 201 residues: Single-stranded DNA-binding protein DdrA (201 aa).

This sequence belongs to the RAD52 family. In terms of assembly, the truncated form (1-160) of DdrA forms heptameric rings that can assemble into a 3-ring structure.

SsDNA-binding protein that contributes to the ionizing radiation resistance of D.deserti. Plays a role in DNA repair and genome reconstitution, in a RecA-independent process, since DdrA is essential for recovery from severe genomic fragmentation as a result of exposure to severe levels of ionizing radiation in an environment lacking nutrients. In vitro, binds to the 3'-ends of single-stranded DNA, and probably protects them from nuclease degradation. Thus, DdrA is part of a DNA end-protection system that helps to preserve genome integrity following irradiation or desiccation. The chain is Single-stranded DNA-binding protein DdrA (ddrA) from Deinococcus deserti (strain DSM 17065 / CIP 109153 / LMG 22923 / VCD115).